The following is a 94-amino-acid chain: FXYD domain-containing ion transport regulator 6 (94 aa).

The signal sequence occupies residues 1 to 17; that stretch reads METVLILCSLLAPVVLA. The Extracellular portion of the chain corresponds to 18-34; the sequence is SAAEKEKEKDPFYYDYQ. The helical transmembrane segment at 35–57 threads the bilayer; sequence TLRIGGLVFAVVLFSVGILLILS. Residues 58–94 are Cytoplasmic-facing; it reads RRCKCSFNQKPRAPGDEEAQVENLITTNAAEPQKAEN.

Belongs to the FXYD family. In terms of assembly, regulatory subunit of the sodium/potassium-transporting ATPase which is composed of a catalytic alpha subunit, a non-catalytic beta subunit and an additional regulatory subunit. The regulatory subunit, a member of the FXYD protein family, modulates the enzymatic activity in a tissue- and isoform-specific way by changing affinities of the Na+/K+-ATPase toward Na(+), K(+) or ATP. In terms of tissue distribution, expressed in the neuronal fibers of the medial part of lateral habenula nucleus, thalamus, hypothalamus, stria terminalis, zona incerta, amygdaloid body and cingulum, olfactory bulb, hippocampus, cerebral cortex and cerebellum. In the cerebellum there is a predominant expression pattern in the granule layer of lobules VI-IX of the posterior lobe. Detected in inner ear.

Its subcellular location is the cell membrane. Functionally, associates with and regulates the activity of the sodium/potassium-transporting ATPase (NKA) which catalyzes the hydrolysis of ATP coupled with the exchange of Na(+) and K(+) ions across the plasma membrane. Decreases the apparent affinity of the transporter for Na(+). In addition to modulating NKA kinetics, may also function as a regulator of NKA localization to the plasma membrane. The protein is FXYD domain-containing ion transport regulator 6 (Fxyd6) of Rattus norvegicus (Rat).